Reading from the N-terminus, the 107-residue chain is Thiosulfate sulfurtransferase GlpE (107 aa).

The Rhodanese domain occupies 19-107; the sequence is QDLNAVLVDI…WHKAGLPVEK (89 aa). Catalysis depends on Cys-67, which acts as the Cysteine persulfide intermediate.

Belongs to the GlpE family.

It localises to the cytoplasm. It catalyses the reaction thiosulfate + hydrogen cyanide = thiocyanate + sulfite + 2 H(+). The catalysed reaction is thiosulfate + [thioredoxin]-dithiol = [thioredoxin]-disulfide + hydrogen sulfide + sulfite + 2 H(+). Transferase that catalyzes the transfer of sulfur from thiosulfate to thiophilic acceptors such as cyanide or dithiols. May function in a CysM-independent thiosulfate assimilation pathway by catalyzing the conversion of thiosulfate to sulfite, which can then be used for L-cysteine biosynthesis. The chain is Thiosulfate sulfurtransferase GlpE from Aliivibrio fischeri (strain MJ11) (Vibrio fischeri).